The sequence spans 570 residues: Urease subunit alpha (570 aa).

Residues 132 to 570 enclose the Urease domain; the sequence is GGFDSHIHYI…LPLAQRYFLF (439 aa). 3 residues coordinate Ni(2+): His137, His139, and Lys220. Residue Lys220 is modified to N6-carboxylysine. Position 222 (His222) interacts with substrate. Ni(2+) contacts are provided by His249 and His275. Residue His323 is the Proton donor of the active site. Ni(2+) is bound at residue Asp363.

This sequence belongs to the metallo-dependent hydrolases superfamily. Urease alpha subunit family. As to quaternary structure, heterotrimer of UreA (gamma), UreB (beta) and UreC (alpha) subunits. Three heterotrimers associate to form the active enzyme. Ni cation serves as cofactor. In terms of processing, carboxylation allows a single lysine to coordinate two nickel ions.

The protein localises to the cytoplasm. The enzyme catalyses urea + 2 H2O + H(+) = hydrogencarbonate + 2 NH4(+). Its pathway is nitrogen metabolism; urea degradation; CO(2) and NH(3) from urea (urease route): step 1/1. The chain is Urease subunit alpha from Ruegeria sp. (strain TM1040) (Silicibacter sp.).